The following is a 231-amino-acid chain: MKFKFLLTPLLSSVLFLSACSATFEADLKNLIKETDGKDLDVSKLIITSEGKQILIGYLKKSYEVNSEKTTELLLNAWKQSAEKNEIGIDLFNWTKSIFSGVNTFNKKQKVEYFNMTYKGISDVSVKAKLNHTLTWNENYSYRGFNIHKGDKHYFNSFLTLKANSYLPFTSKNFDVYSKRIRLSVSFHWILKGKDELSQKILDKTVLNGYIEYIVDNYQINLFRYLVYLIE.

An N-terminal signal peptide occupies residues 1-19; the sequence is MKFKFLLTPLLSSVLFLSA. C20 carries the N-palmitoyl cysteine lipid modification. C20 carries the S-diacylglycerol cysteine lipid modification.

Belongs to the MG439/MG440 family.

It is found in the cell membrane. This is an uncharacterized protein from Mycoplasma pneumoniae (strain ATCC 29342 / M129 / Subtype 1) (Mycoplasmoides pneumoniae).